The primary structure comprises 551 residues: Cytochrome P450 monooxygenase abl5 (551 aa).

The N-linked (GlcNAc...) asparagine glycan is linked to Asn-24. A helical membrane pass occupies residues 37-57 (VVLNTLTAIVVVWICYRAVIY). N-linked (GlcNAc...) asparagine glycosylation is found at Asn-174, Asn-218, Asn-283, Asn-307, and Asn-441. Cys-495 lines the heme pocket.

It belongs to the cytochrome P450 family. The cofactor is heme.

It localises to the membrane. Cytochrome P450 monooxygenase; part of the gene cluster that mediates the biosynthesis of abscisic acid (ABA), a phytohormone that acts antagonistically toward salicylic acid (SA), jasmonic acid (JA) and ethylene (ETH) signaling, to impede plant defense responses. The first step of the pathway catalyzes the reaction from farnesyl diphosphate to alpha-ionylideneethane performed by the alpha-ionylideneethane synthase abl3 via a three-step reaction mechanism involving 2 neutral intermediates, beta-farnesene and allofarnesene. The cytochrome P450 monooxygenase abl1 might then be involved in the conversion of alpha-ionylideneethane to alpha-ionylideneacetic acid. Alpha-ionylideneacetic acid is further converted to abscisic acid in 2 steps involving the cytochrome P450 monooxygenase abl2 and the short-chain dehydrogenase/reductase abl4, via the intermediates 1'-deoxy-ABA or 1',4'-trans-diol-ABA, depending on the order of action of these 2 enzymes. Abl2 is responsible for the hydroxylation of carbon atom C-1' and abl4 might be involved in the oxidation of the C-4' carbon atom. The cytochrome monooxygenase abl5 seems not essential for the biosynthesis of ABA and its function remains to be identified. The chain is Cytochrome P450 monooxygenase abl5 from Leptosphaeria maculans (strain JN3 / isolate v23.1.3 / race Av1-4-5-6-7-8) (Blackleg fungus).